A 168-amino-acid chain; its full sequence is Vasopressin-neurophysin 2-copeptin (168 aa).

The signal sequence occupies residues 1-23; the sequence is MLAMMLNTTLSACFLSLLALTSA. C24 and C29 are disulfide-bonded. G32 carries the glycine amide modification. Cystine bridges form between C45-C89, C48-C62, C56-C79, C63-C69, C96-C108, C102-C120, and C109-C114. The N-linked (GlcNAc...) asparagine glycan is linked to N135.

It belongs to the vasopressin/oxytocin family. As to quaternary structure, interacts with vasopressin receptors V1bR/AVPR1B (Ki=85 pM), V1aR/AVPR1A (Ki=0.6 nM) and V2R/AVPR2 (Ki=4.9 nM). Interacts with oxytocin receptor (OXTR) (Ki=110 nM).

The protein resides in the secreted. Neurophysin 2 specifically binds vasopressin. In terms of biological role, vasopressin has a direct antidiuretic action on the kidney, it also causes vasoconstriction of the peripheral vessels. Acts by binding to vasopressin receptors (V1bR/AVPR1B, V1aR/AVPR1A, and V2R/AVPR2). The polypeptide is Vasopressin-neurophysin 2-copeptin (Avp) (Rattus norvegicus (Rat)).